We begin with the raw amino-acid sequence, 665 residues long: MSTLLIPQDTIAHTFDEAVASESNLRIDEVPENYLERFIHPSEPENFEFYSLRDSDIPSKRIPKNGIQVFENLKYHTNSKDNLYKDQPSSGPSPMRGVANIIREYFPQYLDDLRTWCRPKSSDDSIFNDFNHEQRITQPFTEERERRLLPLIDHFLGIKPYDIVHYCDTRFYPWKLSTRADYFHNHSRDRKAHAAKSHPDFATGPTKKSYFINSHLFFDRSTVHNIKEYGFPFRPTTDSARNETLLDLWFKKVPTELLVRSHISKRDNLKVRPVYNAPMIYIRIECMLFYPLLAQARKRDCCIMYGLETIRGGMNELERISNAFNSFLLIDWSRFDHLAPFTISNFFFKKWLPTKILIDHGYAQISNYHDHVHSFSAQAQSHGIPMISKEYQTPPEATVFAKKVLNLISFLERWYRDMVFVTPDGFAYRRTHAGVPSGILMTQFIDSFVNLTILLDGLIEFGFTDEEIKQLLVFIMGDDNVIFTPWTLLKLIEFFDWFAKYTLDRFGMVINISKSAVTSIRRKIEVLGYTNNYGFPTRSISKLVGQLAYPERHVTDADMCMRAIGFAYASCAQSETFHALCKKVFQYYFAKTSINERLILKGRKAELPGMFFAYPDVSEHIRLDHFPSLSEVRILLSKFQGYLKETPFGTIPTFSTPQTLRDQTQ.

It catalyses the reaction RNA(n) + a ribonucleoside 5'-triphosphate = RNA(n+1) + diphosphate. Its function is as follows. RNA-dependent RNA polymerase which replicates the viral genome. The sequence is that of RNA-directed RNA polymerase from Atkinsonella hypoxylon (AhV).